Reading from the N-terminus, the 746-residue chain is Steroid receptor seven-up, isoform A (746 aa).

The tract at residues 38 to 191 (PPHSAWHEPP…HSQSSNSGSQ (154 aa)) is disordered. The segment covering 56–68 (AASAGPGTTTGSV) has biased composition (low complexity). Residues 83 to 101 (QQSAVIKQDLSCPSLNQAG) show a composition bias toward polar residues. Residues 122–141 (GSAGGHHSGSGSGSGSGVNP) show a composition bias toward gly residues. The span at 158-170 (MLTSIKGQPTGCG) shows a compositional bias: polar residues. Residues 171-191 (STTPSSQANSSHSQSSNSGSQ) are compositionally biased toward low complexity. The segment at residues 197–272 (NIECVVCGDK…MGMRREAVQR (76 aa)) is a DNA-binding region (nuclear receptor). 2 NR C4-type zinc fingers span residues 200–220 (CVVCGDKSSGKHYGQFTCEGC) and 236–260 (CRGSRNCPIDQHHRNQCQYCRLKKC). The NR LBD domain maps to 307–556 (YLSSYISLLL…PLVPSAGSAF (250 aa)). A disordered region spans residues 579–645 (QATPPSSGGG…APAPVPTSSV (67 aa)). Residues 592–605 (GHNNSSGLGASLPT) are compositionally biased toward polar residues. Positions 606–645 (QSQSGSSSRNLTASPLSTSLATAPAPASASAPAPVPTSSV) are enriched in low complexity.

This sequence belongs to the nuclear hormone receptor family. NR2 subfamily. As to expression, expressed in several embryonic tissues; dorsal vessel, oenocyte and fat body. CNS expression is dynamic and confined to temporally restricted subsections of the NB lineage; expressed in many NB and GMCs, but only a small number of neurons.

It is found in the nucleus. In terms of biological role, receptor that is required in photoreceptors R1, R3, R4 and R6 during eye development; generation of the ganglion mother cell-2 (GMC-2) fate in the nb7-3 lineage, coinciding with the transition in the expression of HB to KR in the neuroblasts (NBs). This is Steroid receptor seven-up, isoform A (svp) from Drosophila melanogaster (Fruit fly).